A 505-amino-acid chain; its full sequence is Glutamate--tRNA ligase (505 aa).

A 'HIGH' region motif is present at residues Pro12–Thr22. The 'KMSKS' region signature appears at Lys253–Arg257. Lys256 contacts ATP.

It belongs to the class-I aminoacyl-tRNA synthetase family. Glutamate--tRNA ligase type 1 subfamily. In terms of assembly, monomer.

The protein resides in the cytoplasm. It catalyses the reaction tRNA(Glu) + L-glutamate + ATP = L-glutamyl-tRNA(Glu) + AMP + diphosphate. Functionally, catalyzes the attachment of glutamate to tRNA(Glu) in a two-step reaction: glutamate is first activated by ATP to form Glu-AMP and then transferred to the acceptor end of tRNA(Glu). The sequence is that of Glutamate--tRNA ligase from Chlamydophila psittaci (strain ATCC VR-125 / 6BC) (Chlamydia psittaci).